Consider the following 288-residue polypeptide: uncharacterized protein (288 aa).

Residues 5-81 form the HTH rpiR-type domain; the sequence is GNVLNKIGSL…LELSIELATK (77 aa). Residues 41–60 constitute a DNA-binding region (H-T-H motif); sequence LSEIAKHLQVGEATLVRFCR. The region spanning 129 to 269 is the SIS domain; the sequence is VVKVLKKARR…YALLVQGEED (141 aa).

This is an uncharacterized protein from Haemophilus influenzae (strain ATCC 51907 / DSM 11121 / KW20 / Rd).